The chain runs to 485 residues: uncharacterized protein (485 aa).

Helical transmembrane passes span 79-99, 117-137, 139-159, 170-190, 199-219, 275-295, 313-333, 355-375, 380-400, 421-441, and 448-468; these read LVTL…LIFA, VFAL…FLVF, FFSG…LADL, VIYF…SGFI, WEFW…FLLL, ILIC…LVLI, GLMY…AMPI, LPMG…FGWT, IFWF…IMTS, GVKI…ESLF, and WGCT…PILF.

The protein belongs to the major facilitator superfamily. CAR1 family.

It localises to the membrane. This is an uncharacterized protein from Schizosaccharomyces pombe (strain 972 / ATCC 24843) (Fission yeast).